We begin with the raw amino-acid sequence, 171 residues long: Large ribosomal subunit protein uL10 (171 aa).

Belongs to the universal ribosomal protein uL10 family. In terms of assembly, part of the ribosomal stalk of the 50S ribosomal subunit. The N-terminus interacts with L11 and the large rRNA to form the base of the stalk. The C-terminus forms an elongated spine to which L12 dimers bind in a sequential fashion forming a multimeric L10(L12)X complex.

Forms part of the ribosomal stalk, playing a central role in the interaction of the ribosome with GTP-bound translation factors. The sequence is that of Large ribosomal subunit protein uL10 from Corynebacterium diphtheriae (strain ATCC 700971 / NCTC 13129 / Biotype gravis).